Reading from the N-terminus, the 517-residue chain is MRASTHSWLLLVVVLSLSSFTVNAVILEGLIPPRSHLAPSTFQQPFALSSYLQKLFGTSLRALYGAEQNRQTSVKTFGLREAYHQGIGDKAHERARATFDFRITANDVQADQANIDFIPAIRTVRQRITRAKDPKKYVEVRGQSYRDAMCAASTELDWEDVDVEAPDVTERTTVLAFAKMASAAYKNDTSDWDGIGGFDPTNSFGWEGDGIRGHIFTTHDNDTIVVALKGTSNVFLGGGDTARRDKTNDNLLFSCCCARVSWSWSTVCDCYQGHGDQCGQTCVERALIEKSLYYPAITDLFNNVSYAYPDSQIWITGHSLGGALSSLLGMTFGVPTVTFQAPGERMAAMRLHLPLPPAKHADESPVAALPIVHVYNNADPIATGTCNGAASVCSNFGYAMESKCHSGKSIVYDTVGKLGWSMTINAHRINTLVDDVLTEDWSEKVRKKKAKLRSIGSRGGQISTRGWRWPWHRGDSADDDGDSDEDTDEDDKLAVPKARSEERCQDCTNWHFTDETL.

Residues 1–6 (MRASTH) are Cytoplasmic-facing. The helical; Signal-anchor for type II membrane protein transmembrane segment at 7–27 (SWLLLVVVLSLSSFTVNAVIL) threads the bilayer. Residues 28–517 (EGLIPPRSHL…TNWHFTDETL (490 aa)) lie on the Lumenal side of the membrane. N-linked (GlcNAc...) asparagine glycosylation is found at Asn187, Asn221, and Asn303. Ser319 acts as the Charge relay system in catalysis. Residues 466–499 (GWRWPWHRGDSADDDGDSDEDTDEDDKLAVPKAR) form a disordered region. Acidic residues predominate over residues 477–491 (ADDDGDSDEDTDEDD).

Belongs to the AB hydrolase superfamily. Lipase family. As to quaternary structure, binds to both phosphatidylinositol (PI) and phosphatidylinositol 3,5-bisphosphate (PIP2).

It localises to the endosome. The protein resides in the multivesicular body membrane. The protein localises to the prevacuolar compartment membrane. The catalysed reaction is a triacylglycerol + H2O = a diacylglycerol + a fatty acid + H(+). Lipase which is essential for lysis of subvacuolar cytoplasm to vacuole targeted bodies and intravacuolar autophagic bodies. Involved in the lysis of intravacuolar multivesicular body (MVB) vesicles. The intravacuolar membrane disintegration by ATG15 is critical to life span extension. This is Putative lipase ATG15 (ATG15) from Mycosarcoma maydis (Corn smut fungus).